A 217-amino-acid polypeptide reads, in one-letter code: MHNLFLYSVVFSLGLVSFITCFAAEFKRTQKEDIRWDTERNCYVPGSHAFGLGSAAVLCFCLAQIVGNIVVFRNHRTRTKREDGYKITDLTLPTVLLLLSWSNFVVVVLILSTAISMSRAQAYGEGWLDEDCYLVKDGVFAASGCLAILGLGALTISATRIKVKKQQQLVQVVIKDQNQDQRRSMEEEQKHDEHQTNKSESVIHLVEEVSSTNISRI.

Positions 1-23 (MHNLFLYSVVFSLGLVSFITCFA) are cleaved as a signal peptide. Residues 24–51 (AEFKRTQKEDIRWDTERNCYVPGSHAFG) are Cytoplasmic-facing. The chain crosses the membrane as a helical span at residues 52–72 (LGSAAVLCFCLAQIVGNIVVF). The Extracellular portion of the chain corresponds to 73-94 (RNHRTRTKREDGYKITDLTLPT). The chain crosses the membrane as a helical span at residues 95-115 (VLLLLSWSNFVVVVLILSTAI). Residues 116–137 (SMSRAQAYGEGWLDEDCYLVKD) are Cytoplasmic-facing. Residues 138-158 (GVFAASGCLAILGLGALTISA) form a helical membrane-spanning segment. Over 159-217 (TRIKVKKQQQLVQVVIKDQNQDQRRSMEEEQKHDEHQTNKSESVIHLVEEVSSTNISRI) the chain is Extracellular. N-linked (GlcNAc...) asparagine glycosylation is found at Asn-197 and Asn-213.

The protein belongs to the DESIGUAL family.

The protein localises to the cell membrane. Functionally, together with MWL1, contributes to secondary cell wall biology, specifically lignin biosynthesis. This chain is Protein MODIFYING WALL LIGNIN-2, found in Arabidopsis thaliana (Mouse-ear cress).